We begin with the raw amino-acid sequence, 459 residues long: Ribulose bisphosphate carboxylase (459 aa).

Substrate is bound at residue Asn-111. The Proton acceptor role is filled by Lys-166. Substrate is bound at residue Lys-168. Residues Lys-191, Asp-193, and Glu-194 each coordinate Mg(2+). At Lys-191 the chain carries N6-carboxylysine. Residue His-287 is the Proton acceptor of the active site. Positions 288, 321, and 368 each coordinate substrate.

This sequence belongs to the RuBisCO large chain family. Type II subfamily. In terms of assembly, homodimer. Requires Mg(2+) as cofactor.

It carries out the reaction 2 (2R)-3-phosphoglycerate + 2 H(+) = D-ribulose 1,5-bisphosphate + CO2 + H2O. The catalysed reaction is D-ribulose 1,5-bisphosphate + O2 = 2-phosphoglycolate + (2R)-3-phosphoglycerate + 2 H(+). Its function is as follows. RuBisCO catalyzes two reactions: the carboxylation of D-ribulose 1,5-bisphosphate, the primary event in carbon dioxide fixation, as well as the oxidative fragmentation of the pentose substrate. Both reactions occur simultaneously and in competition at the same active site. The polypeptide is Ribulose bisphosphate carboxylase (Dechloromonas aromatica (strain RCB)).